The primary structure comprises 259 residues: Isoprenyl transferase (259 aa).

Aspartate 33 is a catalytic residue. Mg(2+) is bound at residue aspartate 33. Residues 34–37 (GNRR), tryptophan 38, histidine 51, and 79–81 (STE) each bind substrate. Asparagine 82 serves as the catalytic Proton acceptor. Residues arginine 86, arginine 208, and 214-216 (RMS) contribute to the substrate site. Glutamate 227 serves as a coordination point for Mg(2+).

The protein belongs to the UPP synthase family. Homodimer. Mg(2+) is required as a cofactor.

Functionally, catalyzes the condensation of isopentenyl diphosphate (IPP) with allylic pyrophosphates generating different type of terpenoids. The polypeptide is Isoprenyl transferase (Streptomyces fradiae (Streptomyces roseoflavus)).